Reading from the N-terminus, the 151-residue chain is UPF0102 protein Ava_4800 (151 aa).

This sequence belongs to the UPF0102 family.

The chain is UPF0102 protein Ava_4800 from Trichormus variabilis (strain ATCC 29413 / PCC 7937) (Anabaena variabilis).